A 680-amino-acid chain; its full sequence is Leucine-rich repeat and calponin homology domain-containing protein 4 (680 aa).

Over residues Met1–Leu22 the composition is skewed to low complexity. The disordered stretch occupies residues Met1–Glu35. 9 LRR repeats span residues Ala41–Ser64, Leu67–Leu90, Ser92–Leu113, Thr114–Leu136, Leu138–Leu158, Gly159–Leu181, Arg182–Leu204, Leu206–Leu226, and Arg227–Gly250. Ser279, Ser281, Ser304, Ser307, Ser309, and Ser313 each carry phosphoserine. The segment at Ser329–Pro528 is disordered. The segment covering Glu330 to Gly345 has biased composition (basic and acidic residues). Acidic residues predominate over residues Ala346 to Asp355. Composition is skewed to basic and acidic residues over residues Ile357–Ala371 and Asp385–Gln418. Ser432 is subject to Phosphoserine. 2 stretches are compositionally biased toward low complexity: residues Ala440–Thr453 and Arg510–Pro528. Phosphoserine is present on residues Ser511, Ser513, Ser517, Ser521, and Ser586. The 114-residue stretch at Phe531–Gly644 folds into the Calponin-homology (CH) domain. A helical membrane pass occupies residues Gly655–Thr675.

In terms of tissue distribution, widely expressed across tissues, with the most abundant expression in spleen, testes, thymus, intestine, and blood. Expressed in macrophages.

The protein resides in the cell membrane. Accessory protein that regulates signaling by multiple TLRs, acting as a broad-spanning regulator of the innate immune response. In macrophages, binds LPS and promotes proper docking of LPS in lipid raft membrane. May be required for lipid raft maintenance. In Mus musculus (Mouse), this protein is Leucine-rich repeat and calponin homology domain-containing protein 4 (Lrch4).